The chain runs to 629 residues: Chaperone protein HtpG (629 aa).

The segment at 1–336 (MSSTENNGTA…TEDLSLNVSR (336 aa)) is a; substrate-binding. The interval 337-549 (EMVQSSPVMA…KDAIDSQLER (213 aa)) is b. Residues 550 to 629 (MMKMMNTPMP…ELIEAATLTR (80 aa)) form a c region.

This sequence belongs to the heat shock protein 90 family. In terms of assembly, homodimer.

The protein resides in the cytoplasm. Molecular chaperone. Has ATPase activity. The chain is Chaperone protein HtpG from Chlorobium chlorochromatii (strain CaD3).